We begin with the raw amino-acid sequence, 89 residues long: Small ribosomal subunit protein uS15 (89 aa).

Belongs to the universal ribosomal protein uS15 family. As to quaternary structure, part of the 30S ribosomal subunit. Forms a bridge to the 50S subunit in the 70S ribosome, contacting the 23S rRNA.

Functionally, one of the primary rRNA binding proteins, it binds directly to 16S rRNA where it helps nucleate assembly of the platform of the 30S subunit by binding and bridging several RNA helices of the 16S rRNA. Forms an intersubunit bridge (bridge B4) with the 23S rRNA of the 50S subunit in the ribosome. This chain is Small ribosomal subunit protein uS15, found in Escherichia coli O157:H7.